The sequence spans 255 residues: Methylthioribulose-1-phosphate dehydratase (255 aa).

Residue Cys111 participates in substrate binding. Residues His128 and His130 each contribute to the Zn(2+) site. Glu157 (proton donor/acceptor) is an active-site residue. A Zn(2+)-binding site is contributed by His213.

It belongs to the aldolase class II family. MtnB subfamily. Requires Zn(2+) as cofactor.

Its subcellular location is the cytoplasm. The enzyme catalyses 5-(methylsulfanyl)-D-ribulose 1-phosphate = 5-methylsulfanyl-2,3-dioxopentyl phosphate + H2O. It functions in the pathway amino-acid biosynthesis; L-methionine biosynthesis via salvage pathway; L-methionine from S-methyl-5-thio-alpha-D-ribose 1-phosphate: step 2/6. In terms of biological role, catalyzes the dehydration of methylthioribulose-1-phosphate (MTRu-1-P) into 2,3-diketo-5-methylthiopentyl-1-phosphate (DK-MTP-1-P). This is Methylthioribulose-1-phosphate dehydratase from Talaromyces stipitatus (strain ATCC 10500 / CBS 375.48 / QM 6759 / NRRL 1006) (Penicillium stipitatum).